The primary structure comprises 305 residues: Methionyl-tRNA formyltransferase (305 aa).

Position 111-114 (111-114 (SLLP)) interacts with (6S)-5,6,7,8-tetrahydrofolate.

It belongs to the Fmt family.

The enzyme catalyses L-methionyl-tRNA(fMet) + (6R)-10-formyltetrahydrofolate = N-formyl-L-methionyl-tRNA(fMet) + (6S)-5,6,7,8-tetrahydrofolate + H(+). In terms of biological role, attaches a formyl group to the free amino group of methionyl-tRNA(fMet). The formyl group appears to play a dual role in the initiator identity of N-formylmethionyl-tRNA by promoting its recognition by IF2 and preventing the misappropriation of this tRNA by the elongation apparatus. This is Methionyl-tRNA formyltransferase from Campylobacter jejuni subsp. doylei (strain ATCC BAA-1458 / RM4099 / 269.97).